The sequence spans 804 residues: Ribonucleoside-diphosphate reductase large subunit-like protein (804 aa).

This sequence belongs to the ribonucleoside diphosphate reductase large chain family. In terms of assembly, the genome of human herpesvirus-6 does not code for a ribonucleotide reductase small subunit.

It localises to the virion. It is found in the host cytoplasm. Its function is as follows. Does not possess a ribonucleotide reductase activity. Betaherpesviruses probably use another strategy to expand the dNTP pool in a quiescent host cell. This Human herpesvirus 6B (strain Z29) (HHV-6 variant B) protein is Ribonucleoside-diphosphate reductase large subunit-like protein.